The chain runs to 570 residues: Mitoguardin 1 (570 aa).

A helical membrane pass occupies residues 34 to 54 (GLKKIIAVAAISGVSLIFLAC).

It belongs to the mitoguardin family. In terms of assembly, homodimer and heterodimer; forms heterodimers with miga2.

The protein localises to the mitochondrion outer membrane. In terms of biological role, regulator of mitochondrial fusion: acts by forming homo- and heterodimers at the mitochondrial outer membrane and facilitating the formation of pld6/MitoPLD dimers. May act by regulating phospholipid metabolism via pld6/MitoPLD. This chain is Mitoguardin 1, found in Xenopus laevis (African clawed frog).